The primary structure comprises 209 residues: Protein N-terminal glutamine amidohydrolase (209 aa).

Catalysis depends on residues Cys30, His83, and Asp99.

The protein belongs to the NTAQ1 family. As to quaternary structure, monomer. As to expression, widely expressed.

The protein localises to the cytoplasm. The protein resides in the cytosol. It is found in the nucleus. The enzyme catalyses N-terminal L-glutaminyl-[protein] + H2O = N-terminal L-glutamyl-[protein] + NH4(+). Functionally, mediates the side-chain deamidation of N-terminal glutamine residues to glutamate, an important step in N-end rule pathway of protein degradation. Conversion of the resulting N-terminal glutamine to glutamate renders the protein susceptible to arginylation, polyubiquitination and degradation as specified by the N-end rule. Does not act on substrates with internal or C-terminal glutamine and does not act on non-glutamine residues in any position. Does not deaminate acetylated N-terminal glutamine. With the exception of proline, all tested second-position residues on substrate peptides do not greatly influence the activity. In contrast, a proline at position 2, virtually abolishes deamidation of N-terminal glutamine. The polypeptide is Protein N-terminal glutamine amidohydrolase (Ntaq1) (Mus musculus (Mouse)).